A 578-amino-acid chain; its full sequence is ATP-dependent RNA helicase CHR1 (578 aa).

Residues 1–95 (MDIFRILSRG…NETKAKEEEI (95 aa)) form a disordered region. Basic and acidic residues-rich tracts occupy residues 44-53 (EVERETDFFH) and 78-94 (NKEE…KEEE). Positions 131-159 (DMIGRFHINKKVLSNLIDNEFVEPTPIQC) match the Q motif motif. Residues 162–339 (IPITLNNRDL…HSIMKDPLRI (178 aa)) enclose the Helicase ATP-binding domain. ATP is bound at residue 175–182 (APTGSGKT). Positions 286-289 (DEAD) match the DEAD box motif. The Helicase C-terminal domain occupies 350-514 (TIDQKLVFTG…GYSQWMEDMG (165 aa)). Basic and acidic residues-rich tracts occupy residues 517-531 (SKKE…EIQR) and 561-578 (ESKQ…EREE). The tract at residues 517–578 (SKKEKKQIKT…ESHSNDEREE (62 aa)) is disordered.

The protein belongs to the DEAD box helicase family. DDX52/ROK1 subfamily. In terms of assembly, interacts with the U3 snoRNA and is associated with the 90S and 40S pre-ribosomes.

It localises to the nucleus. The protein resides in the nucleolus. It carries out the reaction ATP + H2O = ADP + phosphate + H(+). Its function is as follows. ATP-dependent RNA helicase involved in 40S ribosomal subunit biogenesis. Required for the processing and cleavage of 35S pre-rRNA at sites A0, A1, and A2, leading to mature 18S rRNA. The polypeptide is ATP-dependent RNA helicase CHR1 (CHR1) (Candida albicans (strain SC5314 / ATCC MYA-2876) (Yeast)).